Reading from the N-terminus, the 127-residue chain is DNA-directed RNA polymerases I, II, and III subunit RPABC2 (127 aa).

Over residues 1–34 (MSDNEDNFDGDDFDDVEEDEGLDDLENAEEEGQE) the composition is skewed to acidic residues. Positions 1 to 53 (MSDNEDNFDGDDFDDVEEDEGLDDLENAEEEGQENVEILPSGERPQANQKRIT) are disordered. Residue serine 2 is modified to N-acetylserine. Serine 2 bears the Phosphoserine; by CK2 mark.

The protein belongs to the archaeal Rpo6/eukaryotic RPB6 RNA polymerase subunit family. In terms of assembly, component of the RNA polymerase I (Pol I), RNA polymerase II (Pol II) and RNA polymerase III (Pol III) complexes consisting of at least 13, 12 and 17 subunits, respectively. Pol I complex consists of a ten-subunit catalytic core composed of POLR1A/RPA1, POLR1B/RPA2, POLR1C/RPAC1, POLR1D/RPAC2, POLR1H/RPA12, POLR2E/RPABC1, POLR2F/RPABC2, POLR2H/RPABC3, POLR2K/RPABC4 and POLR2L/RPABC5; a mobile stalk subunit POLR1F/RPA43 protruding from the core and additional subunits homologous to general transcription factors POLR1E/RPA49 and POLR1G/RPA34. Part of Pol I pre-initiation complex (PIC), in which Pol I core assembles with RRN3 and promoter-bound UTBF and SL1/TIF-IB complex. Pol II complex contains a ten-subunit catalytic core composed of POLR2A/RPB1, POLR2B/RPB2, POLR2C/RPB3, POLR2I/RPB9, POLR2J/RPB11, POLR2E/RPABC1, POLR2F/RPABC2, POLR2H/RPABC3, POLR2K/RPABC4 and POLR2L/RPABC5 and a mobile stalk composed of two subunits POLR2D/RPB4 and POLR2G/RPB7. Part of Pol II(G) complex, in which Pol II core associates with an additional subunit POLR2M; unlike conventional Pol II, Pol II(G) functions as a transcriptional repressor. Part of TBP-based Pol II pre-initiation complex (PIC), in which Pol II core assembles with general transcription factors and other specific initiation factors including GTF2E1, GTF2E2, GTF2F1, GTF2F2, TCEA1, ERCC2, ERCC3, GTF2H2, GTF2H3, GTF2H4, GTF2H5, GTF2A1, GTF2A2, GTF2B and TBP; this large multi-subunit PIC complex mediates DNA unwinding and targets Pol II core to the transcription start site where the first phosphodiester bond forms. Pol III complex consists of a ten-subunit catalytic core composed of POLR3A/RPC1, POLR3B/RPC2, POLR1C/RPAC1, POLR1D/RPAC2, POLR3K/RPC10, POLR2E/RPABC1, POLR2F/RPABC2, POLR2H/RPABC3, POLR2K/RPABC4 and POLR2L/RPABC5; a mobile stalk composed of two subunits POLR3H/RPC8 and CRCP/RPC9, protruding from the core and functioning primarily in transcription initiation; and additional subunits homologous to general transcription factors of the RNA polymerase II machinery, POLR3C/RPC3-POLR3F/RPC6-POLR3G/RPC7 heterotrimer required for transcription initiation and POLR3D/RPC4-POLR3E/RPC5 heterodimer involved in both transcription initiation and termination.

The protein localises to the nucleus. It localises to the nucleolus. DNA-dependent RNA polymerase catalyzes the transcription of DNA into RNA using the four ribonucleoside triphosphates as substrates. Common component of RNA polymerases I, II, and III which synthesize ribosomal RNA precursors, mRNA precursors and many functional non-coding RNAs, and small RNAs, such as 5S rRNA and tRNAs, respectively. Pol II is the central component of the basal RNA polymerase II transcription machinery. Pols are composed of mobile elements that move relative to each other. In Pol II, POLR2F/RPABC2 is part of the clamp element and together with parts of POLR2A/RPB1 and POLR2B/RPB2 forms a pocket to which the POLR2D/RPB4-POLR2G/RPB7 subcomplex binds. This chain is DNA-directed RNA polymerases I, II, and III subunit RPABC2, found in Mus musculus (Mouse).